Consider the following 367-residue polypeptide: Glutamate 5-kinase (367 aa).

ATP is bound at residue Lys10. Substrate contacts are provided by Ser50, Asp137, and Asn149. Residues 169–170 (TD) and 211–217 (TGGMATK) contribute to the ATP site. The PUA domain occupies 275-353 (AGEITVDDGA…QQISEILGYE (79 aa)).

Belongs to the glutamate 5-kinase family.

The protein localises to the cytoplasm. It catalyses the reaction L-glutamate + ATP = L-glutamyl 5-phosphate + ADP. The protein operates within amino-acid biosynthesis; L-proline biosynthesis; L-glutamate 5-semialdehyde from L-glutamate: step 1/2. Functionally, catalyzes the transfer of a phosphate group to glutamate to form L-glutamate 5-phosphate. The sequence is that of Glutamate 5-kinase from Yersinia enterocolitica serotype O:8 / biotype 1B (strain NCTC 13174 / 8081).